Here is a 339-residue protein sequence, read N- to C-terminus: Anthranilate phosphoribosyltransferase (339 aa).

5-phospho-alpha-D-ribose 1-diphosphate-binding positions include G80, 83–84, T88, 90–93, 108–116, and S120; these read GD, NIST, and KHGNRSVSS. G80 is an anthranilate binding site. S92 is a Mg(2+) binding site. Residue N111 coordinates anthranilate. R166 lines the anthranilate pocket. Positions 225 and 226 each coordinate Mg(2+).

It belongs to the anthranilate phosphoribosyltransferase family. Homodimer. Requires Mg(2+) as cofactor.

The catalysed reaction is N-(5-phospho-beta-D-ribosyl)anthranilate + diphosphate = 5-phospho-alpha-D-ribose 1-diphosphate + anthranilate. Its pathway is amino-acid biosynthesis; L-tryptophan biosynthesis; L-tryptophan from chorismate: step 2/5. Functionally, catalyzes the transfer of the phosphoribosyl group of 5-phosphorylribose-1-pyrophosphate (PRPP) to anthranilate to yield N-(5'-phosphoribosyl)-anthranilate (PRA). In Desulfosudis oleivorans (strain DSM 6200 / JCM 39069 / Hxd3) (Desulfococcus oleovorans), this protein is Anthranilate phosphoribosyltransferase.